Reading from the N-terminus, the 282-residue chain is Putative hydrolase Bcenmc03_4750 (282 aa).

Mg(2+) contacts are provided by Glu-124, Glu-126, and Asp-155.

The protein belongs to the FAH family. It depends on Mg(2+) as a cofactor.

In Burkholderia orbicola (strain MC0-3), this protein is Putative hydrolase Bcenmc03_4750.